The primary structure comprises 124 residues: UPF0102 protein Haur_0145 (124 aa).

Belongs to the UPF0102 family.

In Herpetosiphon aurantiacus (strain ATCC 23779 / DSM 785 / 114-95), this protein is UPF0102 protein Haur_0145.